Here is a 307-residue protein sequence, read N- to C-terminus: Ribonuclease Z (307 aa).

The Zn(2+) site is built by His61, His63, Asp65, His66, His138, Asp208, and His264. Asp65 serves as the catalytic Proton acceptor.

Belongs to the RNase Z family. As to quaternary structure, homodimer. The cofactor is Zn(2+).

The enzyme catalyses Endonucleolytic cleavage of RNA, removing extra 3' nucleotides from tRNA precursor, generating 3' termini of tRNAs. A 3'-hydroxy group is left at the tRNA terminus and a 5'-phosphoryl group is left at the trailer molecule.. Functionally, zinc phosphodiesterase, which displays some tRNA 3'-processing endonuclease activity. Probably involved in tRNA maturation, by removing a 3'-trailer from precursor tRNA. This is Ribonuclease Z from Pyrococcus horikoshii (strain ATCC 700860 / DSM 12428 / JCM 9974 / NBRC 100139 / OT-3).